Here is a 246-residue protein sequence, read N- to C-terminus: uncharacterized protein (246 aa).

Disordered regions lie at residues 9–125 and 155–203; these read CSRV…GAMA and QPVR…EEKA. Over residues 27–37 the composition is skewed to basic residues; that stretch reads GTRRQRQRPRQ. 2 stretches are compositionally biased toward pro residues: residues 54 to 64 and 101 to 117; these read PRPPTGPPARY and EPRP…PPGS. Residues 161 to 176 are compositionally biased toward basic residues; it reads KLPKGKGRLRRPRQSR. Residue Thr-179 is modified to Phosphothreonine. Ser-196, Ser-210, and Ser-220 each carry phosphoserine.

The protein localises to the cytoplasm. This is an uncharacterized protein from Mus musculus (Mouse).